Consider the following 107-residue polypeptide: MNDSEFHLLADGLMQALEEALDACQSDADIDCETNGGVMTLSFENGSKIVINRQEPLHQIWLATRAGGYHFDYRNGQWRCSRSGVPLPQVLNEACSAQAGIPVTLDL.

Belongs to the frataxin family.

Its function is as follows. Involved in iron-sulfur (Fe-S) cluster assembly. May act as a regulator of Fe-S biogenesis. This Edwardsiella ictaluri (strain 93-146) protein is Iron-sulfur cluster assembly protein CyaY.